The sequence spans 726 residues: Catalase-peroxidase (726 aa).

The tryptophyl-tyrosyl-methioninium (Trp-Tyr) (with M-239) cross-link spans 90–213 (WHAAGTYRIG…LAAVQMGLIY (124 aa)). The active-site Proton acceptor is histidine 91. The segment at residues 213-239 (YVNPEGPNGKPDPAAAARDIRETFARM) is a cross-link (tryptophyl-tyrosyl-methioninium (Tyr-Met) (with W-90)). Histidine 254 contacts heme b. The segment at 338 to 359 (TPKGGAGAGTVPDAHDPSKRHA) is disordered.

Belongs to the peroxidase family. Peroxidase/catalase subfamily. In terms of assembly, homodimer or homotetramer. It depends on heme b as a cofactor. Post-translationally, formation of the three residue Trp-Tyr-Met cross-link is important for the catalase, but not the peroxidase activity of the enzyme.

It catalyses the reaction H2O2 + AH2 = A + 2 H2O. It carries out the reaction 2 H2O2 = O2 + 2 H2O. Its function is as follows. Bifunctional enzyme with both catalase and broad-spectrum peroxidase activity. This chain is Catalase-peroxidase, found in Bradyrhizobium sp. (strain ORS 278).